A 217-amino-acid polypeptide reads, in one-letter code: METIWIYQFRLIVIGDSTVGKSCLLHRFTQGRFPGLHSPACDPTVGVDFFSRLLEIEPGKRIKLQLWDTAGQERFRSITRSYYRNSVGGFLVFDITNRRSFEHVKDWLEEAKMHVQPFQIVFLLVGHKCDLASQRQVSREEAERLSTDCGMKYIETSAKDATNVEESFTILTRDIYELIKKGEICIQDGWEGVKSGFVPNTVHSSEEAVKPRKECFC.

S17, G20, K21, S22, C23, and T44 together coordinate GTP. S22 is a binding site for Mg(2+). The segment at 39 to 47 is switch-I; that stretch reads PACDPTVGV. 2 residues coordinate Mg(2+): T44 and D68. GTP contacts are provided by G71, H127, K128, D130, A158, and K159. The tract at residues 71–87 is switch-II; that stretch reads GQERFRSITRSYYRNSV. 2 S-geranylgeranyl cysteine lipidation sites follow: C215 and C217. C217 is subject to Cysteine methyl ester.

Belongs to the small GTPase superfamily. Rab family. In terms of assembly, interacts (GDP-bound) with C9orf72; C9orf72 acts as a GEF for RAB39A. Interacts (GTP-bound) with HOPS complex components VPS39 and VPS41, and STX17; interaction between HOPS components and RAB39A contributes to obtaining a functional HOPS complex that promotes membrane fusion driven by STX17-SNAP29-VAMP8. Interacts with BECN1. Probably associates with the PI3K (PI3KC3/PI3K-III/class III phosphatidylinositol 3-kinase) complex. Interacts with UACA. Interacts with isoform a of RASSF1. Does not interact with isoform c of RASSF1. Mg(2+) is required as a cofactor. In terms of processing, prenylated. Prenylation is required for association with cellular membranes.

The protein resides in the cell membrane. It localises to the cytoplasmic vesicle. The protein localises to the phagosome membrane. It is found in the late endosome membrane. Its subcellular location is the lysosome membrane. The protein resides in the autolysosome membrane. It carries out the reaction GTP + H2O = GDP + phosphate + H(+). Regulated by guanine nucleotide exchange factors (GEFs) including c9Orf72, which promote the exchange of bound GDP for free GTP. Regulated by GTPase activating proteins (GAPs) which increase the GTP hydrolysis activity. Inhibited by GDP dissociation inhibitors (GDIs). Functionally, the small GTPases Rab are key regulators of intracellular membrane trafficking, from the formation of transport vesicles to their fusion with membranes. Rabs cycle between an inactive GDP-bound form and an active GTP-bound form that is able to recruit to membranes different sets of downstream effectors directly responsible for vesicle formation, movement, tethering and fusion. RAB39A regulates autophagosome-lysosome fusion via recruitment of the HOPS endosomal tethering complex onto lysosomes; this process involves lysosomal RAB39A and autophagosomal RAB2A recruitment of HOPS subcomplexes VPS41-VPS16-VPS18-VPS33A and VPS39-VPS11, respectively, which assemble into a functional complex to mediate membrane tethering and SNAREs-driven membrane fusion. Also negatively regulates lipopolysaccharide (LPS)-induced autophagosome formation in macrophages, possibly by implicating PI3K. Promotes the delivery of MHC-I molecules from the ER to phagosomes and the generation of peptide-loaded MHC-I complexes in phagosomes, thus enhancing antigen cross-presentation by dendritic cells. Plays a role in the maturation and acidification of phagosomes that engulf pathogens, such as S.aureus and M.tuberculosis. Plays a role in the fusion of phagosomes with lysosomes. May be involved in multiple neurite formation. This chain is Ras-related protein Rab-39A, found in Mus musculus (Mouse).